The following is a 509-amino-acid chain: Zinc finger CCCH-type with G patch domain-containing protein (509 aa).

The interval 41–61 is disordered; sequence TRGSEPEATSDTKTPETSDNI. Over residues 47–58 the composition is skewed to polar residues; it reads EATSDTKTPETS. The C3H1-type zinc finger occupies 155–178; it reads PCNYFLEGECRFDEVRCRYSHGAL. The segment at 254 to 278 is disordered; sequence DDDLTSESEESNETDGSDAGNDSDM. Residues 310-356 enclose the G-patch domain; the sequence is TRGIGSKLMANMGYIHGTGLGSDGRGIVTPVSAQILPQGRSLDACME. The disordered stretch occupies residues 410-433; it reads GSQQTENANKKTKPNNLQQHSNKT. Residues 423–433 show a composition bias toward polar residues; the sequence is PNNLQQHSNKT.

It localises to the nucleus. Functionally, transcription repressor. The protein is Zinc finger CCCH-type with G patch domain-containing protein of Drosophila mojavensis (Fruit fly).